Reading from the N-terminus, the 115-residue chain is Nucleoid-associated protein Ccel_0243 (115 aa).

Belongs to the YbaB/EbfC family. As to quaternary structure, homodimer.

It localises to the cytoplasm. The protein resides in the nucleoid. Functionally, binds to DNA and alters its conformation. May be involved in regulation of gene expression, nucleoid organization and DNA protection. The chain is Nucleoid-associated protein Ccel_0243 from Ruminiclostridium cellulolyticum (strain ATCC 35319 / DSM 5812 / JCM 6584 / H10) (Clostridium cellulolyticum).